A 634-amino-acid polypeptide reads, in one-letter code: Poly(ribitol-phosphate) beta-glucosyltransferase (634 aa).

It belongs to the glycosyltransferase 2 family.

The enzyme catalyses 4-O-[(D-ribitylphospho)(n)-D-ribitylphospho-(2R)-glycerylphospho]-N-acetyl-beta-D-mannosaminyl-(1-&gt;4)-N-acetyl-alpha-D-glucosaminyl di-trans,octa-cis-undecaprenyl diphosphate + n UDP-alpha-D-glucose = 4-O-[(2-beta-D-glucosyl-D-ribitylphospho)(n)-D-ribitylphospho-(2R)-glycerylphospho]-N-acetyl-beta-D-mannosaminyl-(1-&gt;4)-N-acetyl-alpha-D-glucosaminyl di-trans,octa-cis-undecaprenyl diphosphate + n UDP + n H(+). It participates in cell wall biogenesis; poly(ribitol phosphate) teichoic acid biosynthesis. Functionally, attaches glucose residues to poly(RboP)-wall teichoic acids (WTAs). The sequence is that of Poly(ribitol-phosphate) beta-glucosyltransferase from Bacillus spizizenii (strain ATCC 23059 / NRRL B-14472 / W23) (Bacillus subtilis subsp. spizizenii).